A 1573-amino-acid polypeptide reads, in one-letter code: Mediator of RNA polymerase II transcription subunit 1 (1573 aa).

The LXXLL motif 1 signature appears at 588–592; sequence LTSLL. Disordered stretches follow at residues 595–691, 774–883, and 928–1564; these read TSNS…EDDF, SKLP…FKDF, and LGGP…GDDD. Residues 606–617 show a composition bias toward pro residues; sequence PTPPQHTPPPAS. An LXXLL motif 2 motif is present at residues 629 to 633; sequence LMNLL. The span at 651 to 668 shows a compositional bias: polar residues; sequence ERQNSSGSPRTELGSSAS. Residues 678–691 show a composition bias toward basic and acidic residues; it reads TGTEKMKNQTEDDF. Polar residues-rich tracts occupy residues 791–804, 835–864, and 934–944; these read RDSS…STLF, GSPN…QSGF, and QETQSRSQSPL. The span at 949-961 shows a compositional bias: basic and acidic residues; it reads LGKDRPQKQKVKE. The span at 963 to 973 shows a compositional bias: gly residues; sequence GNGGGAGGGLS. Composition is skewed to low complexity over residues 1025–1038, 1053–1085, 1092–1116, 1124–1143, and 1155–1164; these read PTST…GTSG, KITI…SSSS, SSLS…MKIG, SGQS…SMGK, and SSNVNNSSGS. Over residues 1176-1193 the composition is skewed to polar residues; that stretch reads MNPSLSKPNISPSHSRPS. Residues 1226-1277 are compositionally biased toward low complexity; it reads LSGSGSNSTTKSSSGLVSSGSLTQKPNSSSSSSSSSSSSSSSSSSSSSSFSS. The segment covering 1278–1290 has biased composition (polar residues); it reads GVSQNLHSSSKGK. The span at 1350 to 1362 shows a compositional bias: basic and acidic residues; that stretch reads PTKREKGEKDKSK. Polar residues-rich tracts occupy residues 1420–1435 and 1443–1457; these read SQMQ…SGST and PSHN…QALD. The span at 1461 to 1471 shows a compositional bias: low complexity; sequence ESGSSSIAEKS. Residues 1496–1505 are compositionally biased toward basic residues; the sequence is KHKKHKKEKK. A compositionally biased stretch (basic and acidic residues) spans 1506–1518; the sequence is RLKDKDRDREKKK.

This sequence belongs to the Mediator complex subunit 1 family. In terms of assembly, component of the Mediator complex.

It localises to the nucleus. In terms of biological role, component of the Mediator complex, a coactivator involved in the regulated transcription of nearly all RNA polymerase II-dependent genes. Mediator functions as a bridge to convey information from gene-specific regulatory proteins to the basal RNA polymerase II transcription machinery. Mediator is recruited to promoters by direct interactions with regulatory proteins and serves as a scaffold for the assembly of a functional preinitiation complex with RNA polymerase II and the general transcription factors. In Xenopus tropicalis (Western clawed frog), this protein is Mediator of RNA polymerase II transcription subunit 1 (med1).